The following is a 343-amino-acid chain: CMP-N-acetylneuraminate-beta-galactosamide-alpha-2,3-sialyltransferase 1 (343 aa).

Topologically, residues 1 to 11 (MAPMRKKSTLK) are cytoplasmic. The helical; Signal-anchor for type II membrane protein transmembrane segment at 12–27 (LLTLLVLFIFLTSFFL) threads the bilayer. Asn28 is a glycosylation site (N-linked (GlcNAc...) asparagine). Topologically, residues 28-343 (NYSHTVVTTA…INKIRIFKGR (316 aa)) are lumenal. 3 disulfide bridges follow: Cys62–Cys67, Cys64–Cys142, and Cys145–Cys284. Residue Asn82 is glycosylated (N-linked (GlcNAc...) asparagine). Position 108 (Gln108) interacts with substrate. A glycan (N-linked (GlcNAc...) asparagine) is linked at Asn117. Substrate is bound by residues Asn150, Asn173, Tyr233, Tyr269, Gly273, Gly293, His302, and His319. The N-linked (GlcNAc...) asparagine glycan is linked to Asn326.

This sequence belongs to the glycosyltransferase 29 family. In terms of processing, the soluble form derives from the membrane form by proteolytic processing. In terms of tissue distribution, the long isoform is abundant in salivary gland, liver, lung, and colon mucosa. Both long and short forms are detected in submaxillary salivary glands.

The protein resides in the golgi apparatus. The protein localises to the golgi stack membrane. It localises to the trans-Golgi network membrane. Its subcellular location is the secreted. The enzyme catalyses a beta-D-galactosyl-(1-&gt;3)-N-acetyl-alpha-D-galactosaminyl derivative + CMP-N-acetyl-beta-neuraminate = an N-acetyl-alpha-neuraminyl-(2-&gt;3)-beta-D-galactosyl-(1-&gt;3)-N-acetyl-alpha-D-galactosaminyl derivative + CMP + H(+). The catalysed reaction is a ganglioside GM1 (d18:1(4E)) + CMP-N-acetyl-beta-neuraminate = a ganglioside GD1a (d18:1(4E)) + CMP + H(+). It carries out the reaction ganglioside GM1 (d18:1(4E)/18:0) + CMP-N-acetyl-beta-neuraminate = ganglioside GD1a (18:1(4E)/18:0) + CMP + H(+). It catalyses the reaction a ganglioside GA1 (d18:1(4E)) + CMP-N-acetyl-beta-neuraminate = a ganglioside GM1b (d18:1(4E)) + CMP + H(+). The enzyme catalyses a ganglioside GD1b + CMP-N-acetyl-beta-neuraminate = a ganglioside GT1b + CMP + H(+). The catalysed reaction is a 3-O-[beta-D-galactosyl-(1-&gt;3)-N-acetyl-alpha-D-galactosaminyl]-L-threonyl-[protein] + CMP-N-acetyl-beta-neuraminate = a 3-O-[N-acetyl-alpha-neuraminyl-(2-&gt;3)-beta-D-galactosyl-(1-&gt;3)-N-acetyl-alpha-D-galactosaminyl]-L-threonyl-[protein] + CMP + H(+). It carries out the reaction a 3-O-[beta-D-galactosyl-(1-&gt;3)-N-acetyl-alpha-D-galactosaminyl]-L-seryl-[protein] + CMP-N-acetyl-beta-neuraminate = 3-O-[N-acetyl-alpha-neuraminyl-(2-&gt;3)-beta-D-galactosyl-(1-&gt;3)-N-acetyl-alpha-D-galactosaminyl]-L-seryl-[protein] + CMP + H(+). The protein operates within protein modification; protein glycosylation. Its pathway is glycolipid biosynthesis. Functionally, a beta-galactoside alpha2-&gt;3 sialyltransferase involved in terminal sialylation of glycoproteins and glycolipids. Catalyzes the transfer of sialic acid (N-acetyl-neuraminic acid; Neu5Ac) from the nucleotide sugar donor CMP-Neu5Ac onto acceptor Galbeta-(1-&gt;3)-GalNAc-terminated glycoconjugates through an alpha2-3 linkage. Adds sialic acid to the core 1 O-glycan, Galbeta-(1-&gt;3)-GalNAc-O-Ser/Thr, which is a major structure of mucin-type O-glycans. As part of a homeostatic mechanism that regulates CD8-positive T cell numbers, sialylates core 1 O-glycans of T cell glycoproteins, SPN/CD43 and PTPRC/CD45. Prevents premature apoptosis of thymic CD8-positive T cells prior to peripheral emigration, whereas in the secondary lymphoid organs controls the survival of CD8-positive memory T cells generated following a successful immune response. Transfers sialic acid to asialofetuin, presumably onto Galbeta-(1-&gt;3)-GalNAc-O-Ser. Sialylates GM1a, GA1 and GD1b gangliosides to form GD1a, GM1b and GT1b, respectively. In Sus scrofa (Pig), this protein is CMP-N-acetylneuraminate-beta-galactosamide-alpha-2,3-sialyltransferase 1 (ST3GAL1).